A 181-amino-acid chain; its full sequence is Thioredoxin-like protein CITRX2, chloroplastic (181 aa).

The N-terminal 70 residues, 1 to 70 (MQAATLSFQP…PDVATGKYVR (70 aa)), are a transit peptide targeting the chloroplast. The Thioredoxin domain maps to 72 to 181 (DYLVKKVSAK…MMRDIINNDL (110 aa)). Active-site nucleophile residues include Cys104 and Cys107. An intrachain disulfide couples Cys104 to Cys107.

The protein belongs to the thioredoxin family. Plant CITRX-type subfamily.

The protein localises to the plastid. It localises to the chloroplast. Probable thiol-disulfide oxidoreductase that may play a role in proper chloroplast development. This is Thioredoxin-like protein CITRX2, chloroplastic from Nicotiana benthamiana.